Here is a 243-residue protein sequence, read N- to C-terminus: Ubiquinone/menaquinone biosynthesis C-methyltransferase UbiE (243 aa).

S-adenosyl-L-methionine is bound by residues Thr-69, Asp-90, and 116–117 (DA).

This sequence belongs to the class I-like SAM-binding methyltransferase superfamily. MenG/UbiE family.

It carries out the reaction a 2-demethylmenaquinol + S-adenosyl-L-methionine = a menaquinol + S-adenosyl-L-homocysteine + H(+). It catalyses the reaction a 2-methoxy-6-(all-trans-polyprenyl)benzene-1,4-diol + S-adenosyl-L-methionine = a 5-methoxy-2-methyl-3-(all-trans-polyprenyl)benzene-1,4-diol + S-adenosyl-L-homocysteine + H(+). Its pathway is quinol/quinone metabolism; menaquinone biosynthesis; menaquinol from 1,4-dihydroxy-2-naphthoate: step 2/2. It functions in the pathway cofactor biosynthesis; ubiquinone biosynthesis. Methyltransferase required for the conversion of demethylmenaquinol (DMKH2) to menaquinol (MKH2) and the conversion of 2-polyprenyl-6-methoxy-1,4-benzoquinol (DDMQH2) to 2-polyprenyl-3-methyl-6-methoxy-1,4-benzoquinol (DMQH2). The sequence is that of Ubiquinone/menaquinone biosynthesis C-methyltransferase UbiE from Cupriavidus necator (strain ATCC 17699 / DSM 428 / KCTC 22496 / NCIMB 10442 / H16 / Stanier 337) (Ralstonia eutropha).